We begin with the raw amino-acid sequence, 91 residues long: Probable Fe(2+)-trafficking protein (91 aa).

The protein belongs to the Fe(2+)-trafficking protein family.

Its function is as follows. Could be a mediator in iron transactions between iron acquisition and iron-requiring processes, such as synthesis and/or repair of Fe-S clusters in biosynthetic enzymes. In Actinobacillus pleuropneumoniae serotype 5b (strain L20), this protein is Probable Fe(2+)-trafficking protein.